A 143-amino-acid chain; its full sequence is Ribosome-binding factor A (143 aa).

The interval 119 to 143 is disordered; that stretch reads KAKQQQFTPDTPDNSESVDGEKEQD. Positions 122–133 are enriched in polar residues; sequence QQQFTPDTPDNS.

It belongs to the RbfA family. Monomer. Binds 30S ribosomal subunits, but not 50S ribosomal subunits or 70S ribosomes.

It localises to the cytoplasm. Its function is as follows. One of several proteins that assist in the late maturation steps of the functional core of the 30S ribosomal subunit. Associates with free 30S ribosomal subunits (but not with 30S subunits that are part of 70S ribosomes or polysomes). Required for efficient processing of 16S rRNA. May interact with the 5'-terminal helix region of 16S rRNA. The chain is Ribosome-binding factor A from Shewanella frigidimarina (strain NCIMB 400).